The chain runs to 355 residues: MAEGIVFDADAVSKDIAEGIAAIQQASTMEELKAIKAKYAGANSAMTRASKAIGSLAKNEKKEAGKVMGKLRADFGRAYGTKEASVKAAQEAAELAAETVDMTLPIRRKPLGARHPLPKLMEDVEDFFVGMGWQISDGPEVETEWFDFDALNFGPDHPARQMQDTFYVKGNQSKDAAGFVGSNMVLRTQTSSDQVRGLISHGVPLYIACPGRVFRTDELDATHTPVFHQVEALAVDKNLTMADLKGVLDKLAVAMFGPEAKSRLRPSYFPFTEPSAELDLWFPDKKGGPGWIEWGGCGMVNPNVLRSAGIDPDIYTGFAFGVGVERTLLLRHDINDMHDLVEGDVRFSEQFVMGE.

Glu273 contributes to the Mg(2+) binding site.

It belongs to the class-II aminoacyl-tRNA synthetase family. Phe-tRNA synthetase alpha subunit type 1 subfamily. In terms of assembly, tetramer of two alpha and two beta subunits. It depends on Mg(2+) as a cofactor.

The protein resides in the cytoplasm. The catalysed reaction is tRNA(Phe) + L-phenylalanine + ATP = L-phenylalanyl-tRNA(Phe) + AMP + diphosphate + H(+). In Bifidobacterium animalis subsp. lactis (strain AD011), this protein is Phenylalanine--tRNA ligase alpha subunit.